A 348-amino-acid polypeptide reads, in one-letter code: tRNA N6-adenosine threonylcarbamoyltransferase (348 aa).

Positions 118 and 122 each coordinate Fe cation. Substrate contacts are provided by residues 140–144 (LVSGG), Asp-173, Gly-186, Asp-190, and Asn-279. Residue Asp-309 coordinates Fe cation.

This sequence belongs to the KAE1 / TsaD family. Fe(2+) is required as a cofactor.

It is found in the cytoplasm. It catalyses the reaction L-threonylcarbamoyladenylate + adenosine(37) in tRNA = N(6)-L-threonylcarbamoyladenosine(37) in tRNA + AMP + H(+). Required for the formation of a threonylcarbamoyl group on adenosine at position 37 (t(6)A37) in tRNAs that read codons beginning with adenine. Is involved in the transfer of the threonylcarbamoyl moiety of threonylcarbamoyl-AMP (TC-AMP) to the N6 group of A37, together with TsaE and TsaB. TsaD likely plays a direct catalytic role in this reaction. The protein is tRNA N6-adenosine threonylcarbamoyltransferase of Lactiplantibacillus plantarum (strain ATCC BAA-793 / NCIMB 8826 / WCFS1) (Lactobacillus plantarum).